Reading from the N-terminus, the 107-residue chain is Age-related maculopathy susceptibility protein 2 (107 aa).

The tract at residues 1 to 21 (MLRLYPGPMVTEAEGKGGPEM) is disordered.

Detected in retina and placenta.

It is found in the cytoplasm. The chain is Age-related maculopathy susceptibility protein 2 (ARMS2) from Homo sapiens (Human).